A 495-amino-acid polypeptide reads, in one-letter code: Cornulin (495 aa).

In terms of domain architecture, EF-hand spans 49-84 (HDPATVDEVLRLLDEDHTGTVEFKEFLVLVFKVAQA). Positions 62, 64, 66, 68, and 73 each coordinate Ca(2+). 2 disordered regions span residues 96-439 (ACGS…TVVG) and 460-481 (LHTS…KRGI). Residues 99-110 (SQESGSLHSGAS) are compositionally biased toward polar residues. Positions 137-151 (HRQSQQGSRGQNRPG) are enriched in low complexity. Over residues 152–194 (VQTQGQATGSAWVSSYDRQAESQSQERISPQIQLSGQTEQTQK) the composition is skewed to polar residues. Residues 196–222 (GEGKRNQTTEMRPERQPQTREQDRAHQ) show a composition bias toward basic and acidic residues. The span at 226–242 (TVTGSGTQTQAGATQTV) shows a compositional bias: low complexity. Composition is skewed to polar residues over residues 243-282 (EQDS…SQAV) and 290-303 (QAGT…QTVE). Over residues 307–324 (SHQTGSTSTQTQESTNGQ) the composition is skewed to low complexity. Residues 334–355 (GRSQTSQAVTGGHTQIQAGSHT) show a composition bias toward polar residues. Positions 374 to 385 (QGQTQTQPGSGQ) are enriched in low complexity. 2 stretches are compositionally biased toward polar residues: residues 403-420 (QAQT…WSST) and 460-473 (LHTS…QDAA).

The protein belongs to the S100-fused protein family. As to quaternary structure, homodimer. As to expression, expressed in the basal skin layer (at protein level). Squamous epithelia cell-specific. Expressed in the esophagus (periphery of the cells of the granular and the upper spinous layers), foreskin (granular and lower cornified cells), scalp skin (granular layer), inner root sheath of the hair follicle and in primary keratinocytes (at protein level). Expressed in the squamous epithelium of the cervix, esophagus, foreskin and larynx. Expressed in the fetal bladder and scalp skin. Expressed at very low levels in the lung, kidney, uterus, skeletal muscle, heart and fetal brain. Undetectable or barely detectable in esophageal and oral squamous cell carcinoma compared with the matched adjacent normal esophageal mucosa. Undetectable or barely detectable in larynx and esophagus from patients with pH-documented laryngopharyngeal reflux (LPR).

The protein resides in the cytoplasm. Functionally, promotes cell proliferation, G1/S cell cycle progression and induces expression of the cell cycle regulator CCND1. Regulates proliferation induced by pro-inflammatory cytokine response via activation of NFKB1 and PI3K/AKT signaling pathways. The chain is Cornulin (CRNN) from Homo sapiens (Human).